The primary structure comprises 269 residues: 3-methyl-2-oxobutanoate hydroxymethyltransferase (269 aa).

Mg(2+)-binding residues include D52 and D91. Residues 52–53 (DT), D91, and K121 each bind 3-methyl-2-oxobutanoate. E123 lines the Mg(2+) pocket. Residue E186 is the Proton acceptor of the active site.

This sequence belongs to the PanB family. In terms of assembly, homodecamer; pentamer of dimers. The cofactor is Mg(2+).

It is found in the cytoplasm. It carries out the reaction 3-methyl-2-oxobutanoate + (6R)-5,10-methylene-5,6,7,8-tetrahydrofolate + H2O = 2-dehydropantoate + (6S)-5,6,7,8-tetrahydrofolate. Its pathway is cofactor biosynthesis; (R)-pantothenate biosynthesis; (R)-pantoate from 3-methyl-2-oxobutanoate: step 1/2. Catalyzes the reversible reaction in which hydroxymethyl group from 5,10-methylenetetrahydrofolate is transferred onto alpha-ketoisovalerate to form ketopantoate. This chain is 3-methyl-2-oxobutanoate hydroxymethyltransferase, found in Rhodopirellula baltica (strain DSM 10527 / NCIMB 13988 / SH1).